Consider the following 395-residue polypeptide: MKHVIMLYFIAAATLFSSCAKQDSEHRLITVKNSLDLPRAFETIEISKSDIQLHTGERFEDFSIQDVATKAILTSQFVDEDQDGTADVLLFQPELNPNSEKQFELVKVDGGVEVDSTVYCYSRFVPERTDDYTWENNKVAFRTYGPVAQKMVEDSLPGGTLSSGIDAWLKKVEYSIIDNWYAKNDKDPGYYHIDHGEGLDNFHVGSSRGVGGSAVKVDTSYYISKNFTDYKTITTGPIRTSFILKYADWDANEKTISEEKHISLDYGNNFSRFEIHVDGTDELSVGLTLHDNKGEITQNVDQGWIAYWESEYFDSELGTAIVAPKGVMTASEYYVTSMKDRSNLYAQLNVDNNKVVYYAGFAWKESKQYPTKASWEKYIQEFSEKLNTPLEVSIQ.

The N-terminal stretch at 1 to 18 (MKHVIMLYFIAAATLFSS) is a signal peptide. Cysteine 19 carries the N-palmitoyl cysteine lipid modification. Residue cysteine 19 is the site of S-diacylglycerol cysteine attachment.

It is found in the cell outer membrane. Its function is as follows. May be involved in ulvan degradation. Ulvan is the main polysaccharide component of the Ulvales (green seaweed) cell wall. It is composed of disaccharide building blocks comprising 3-sulfated rhamnose (Rha3S) linked to D-glucuronic acid (GlcA), L-iduronic acid (IduA), or D-xylose (Xyl). This is an uncharacterized protein from Formosa agariphila (strain DSM 15362 / KCTC 12365 / LMG 23005 / KMM 3901 / M-2Alg 35-1).